The chain runs to 405 residues: Deoxyguanosinetriphosphate triphosphohydrolase-like protein (405 aa).

The region spanning 75–219 is the HD domain; the sequence is RLTHTIEVAQ…AAIADDIAYN (145 aa).

This sequence belongs to the dGTPase family. Type 2 subfamily.

The sequence is that of Deoxyguanosinetriphosphate triphosphohydrolase-like protein from Sinorhizobium medicae (strain WSM419) (Ensifer medicae).